We begin with the raw amino-acid sequence, 79 residues long: Protein B6 (79 aa).

The protein is Protein B6 (B6) of Human herpesvirus 6B (strain Z29) (HHV-6 variant B).